Consider the following 522-residue polypeptide: MEFPDHSRHLLQCLSEQRHQGFLCDCTVLVGDAQFRAHRAVLASCSMYFHLFYKDQLDKRDIVHLNSDIVTAPAFALLLEFMYEGKLQFKDLPIEDVLAAASYLHMYDIVKVCKKKLKEKATTEADSTKKEEDASSCSDKVESLSDGSSHMAGDLPSDEDEGEDEKLNILPSKRDLAAEPGNMWMRLPSDSAGIPQAGGEAEPHATAAGKTVASPCSSTESLSQRSVTSVRDSADVDCVLDLSVKSSLSGVENLNSSYFSSQDVLRSNLVQVKVEKEASCDESDVGTNDYDMEHSTVKESVSTNNRVQYEPAHLAPLREDSVLRELEREDKASDDEMMTPESERVQVEGGMESSLLPYVSNILSPAGQIFMCPLCNKVFPSPHILQIHLSTHFREQDGLRSKPAADVNVPTCSLCGKTFSCMYTLKRHERTHSGEKPYTCTQCGKSFQYSHNLSRHAVVHTREKPHACKWCERRFTQSGDLYRHIRKFHCELVNSLSVKSEALSLPAVRDWTLEDSSQELWK.

In terms of domain architecture, BTB spans 24–91 (CDCTVLVGDA…MYEGKLQFKD (68 aa)). Positions 121-143 (ATTEADSTKKEEDASSCSDKVES) are enriched in basic and acidic residues. The interval 121-165 (ATTEADSTKKEEDASSCSDKVESLSDGSSHMAGDLPSDEDEGEDE) is disordered. Position 157 is a phosphoserine (Ser-157). Lys-273 is covalently cross-linked (Glycyl lysine isopeptide (Lys-Gly) (interchain with G-Cter in SUMO2)). Residues 310–427 (EPAHLAPLRE…TFSCMYTLKR (118 aa)) form an interaction with DNMT3A region. 4 consecutive C2H2-type zinc fingers follow at residues 370–392 (FMCP…LSTH), 410–432 (PTCS…ERTH), 438–460 (YTCT…AVVH), and 466–489 (HACK…RKFH). 2 positions are modified to phosphoserine: Ser-516 and Ser-517.

Belongs to the krueppel C2H2-type zinc-finger protein family. ZBTB18 subfamily. In terms of assembly, interacts with DNMT3A.

It localises to the nucleus. Transcriptional repressor that plays a role in various developmental processes such as myogenesis and brain development. Specifically binds the consensus DNA sequence 5'-[AC]ACATCTG[GT][AC]-3' which contains the E box core, and acts by recruiting chromatin remodeling multiprotein complexes. Plays a key role in myogenesis by directly repressing the expression of ID2 and ID3, 2 inhibitors of skeletal myogenesis. Also involved in controlling cell division of progenitor cells and regulating the survival of postmitotic cortical neurons. May also play a role in the organization of chromosomes in the nucleus. In Bos taurus (Bovine), this protein is Zinc finger and BTB domain-containing protein 18 (ZBTB18).